A 149-amino-acid polypeptide reads, in one-letter code: Large ribosomal subunit protein bL9 (149 aa).

This sequence belongs to the bacterial ribosomal protein bL9 family.

In terms of biological role, binds to the 23S rRNA. This Legionella pneumophila (strain Lens) protein is Large ribosomal subunit protein bL9.